The following is a 356-amino-acid chain: Deoxyribonuclease-2-beta (356 aa).

Positions 1–22 (MTAQPLKAALPLLFVALSGVLG) are cleaved as a signal peptide. Asn-77, Asn-98, Asn-114, and Asn-273 each carry an N-linked (GlcNAc...) asparagine glycan.

This sequence belongs to the DNase II family. In terms of tissue distribution, liver specific.

The protein localises to the lysosome. The enzyme catalyses Endonucleolytic cleavage to nucleoside 3'-phosphates and 3'-phosphooligonucleotide end-products.. In terms of biological role, hydrolyzes DNA under acidic conditions. Does not require divalent cations for activity. Participates in the degradation of nuclear DNA during lens cell differentiation. This is Deoxyribonuclease-2-beta (Dnase2b) from Rattus norvegicus (Rat).